Reading from the N-terminus, the 311-residue chain is Transcription factor bHLH145 (311 aa).

One can recognise a bHLH domain in the interval 253–302; that stretch reads FLKRSKLSSNKIGEEKIFETVSLLRSVVPGEELVDPILVIDRAIDYLKSL.

As to quaternary structure, homodimer.

The protein localises to the nucleus. This is Transcription factor bHLH145 (BHLH145) from Arabidopsis thaliana (Mouse-ear cress).